The primary structure comprises 846 residues: Translation initiation factor IF-2 (846 aa).

The disordered stretch occupies residues 94–263; sequence QRSPEEIQAE…HGFQNPTGPV (170 aa). Residues 96–135 show a composition bias toward basic and acidic residues; that stretch reads SPEEIQAEQKRELDERRAAENAARDKVEAEVRQRNEEQAR. Composition is skewed to low complexity over residues 136–148 and 158–176; these read RQAA…APAP and AAPV…ASED. 2 stretches are compositionally biased toward basic and acidic residues: residues 177–206 and 230–239; these read AAAR…RGEA and TTDEESDGAR. Positions 240–253 are enriched in basic residues; the sequence is RGRGGKSKLKKRNQ. Residues 346–513 enclose the tr-type G domain; that stretch reads SRAPVVTVMG…AVLLQAEILE (168 aa). Residues 355–362 form a G1 region; that stretch reads GHVDHGKT. 355 to 362 contacts GTP; that stretch reads GHVDHGKT. The segment at 380–384 is G2; it reads GITQH. Residues 401–404 form a G3 region; it reads DTPG. GTP is bound by residues 401 to 405 and 455 to 458; these read DTPGH and NKID. The interval 455-458 is G4; the sequence is NKID. The G5 stretch occupies residues 491-493; sequence SAK.

Belongs to the TRAFAC class translation factor GTPase superfamily. Classic translation factor GTPase family. IF-2 subfamily.

Its subcellular location is the cytoplasm. Functionally, one of the essential components for the initiation of protein synthesis. Protects formylmethionyl-tRNA from spontaneous hydrolysis and promotes its binding to the 30S ribosomal subunits. Also involved in the hydrolysis of GTP during the formation of the 70S ribosomal complex. This is Translation initiation factor IF-2 from Pseudomonas putida (strain ATCC 47054 / DSM 6125 / CFBP 8728 / NCIMB 11950 / KT2440).